The primary structure comprises 318 residues: GTP cyclohydrolase MptA (318 aa).

It belongs to the GTP cyclohydrolase IV family. Homodimer. Requires Fe(2+) as cofactor.

The enzyme catalyses GTP + H2O = 7,8-dihydroneopterin 2',3'-cyclic phosphate + formate + diphosphate + H(+). The protein operates within cofactor biosynthesis; 5,6,7,8-tetrahydromethanopterin biosynthesis. In terms of biological role, converts GTP to 7,8-dihydro-D-neopterin 2',3'-cyclic phosphate, the first intermediate in the biosynthesis of coenzyme methanopterin. This is GTP cyclohydrolase MptA from Methanosarcina mazei (strain ATCC BAA-159 / DSM 3647 / Goe1 / Go1 / JCM 11833 / OCM 88) (Methanosarcina frisia).